The following is a 275-amino-acid chain: NH(3)-dependent NAD(+) synthetase (275 aa).

50-57 (GISGGVDS) contacts ATP. Position 56 (aspartate 56) interacts with Mg(2+). A deamido-NAD(+)-binding site is contributed by arginine 147. An ATP-binding site is contributed by threonine 167. Glutamate 172 contacts Mg(2+). Positions 180 and 187 each coordinate deamido-NAD(+). 2 residues coordinate ATP: lysine 196 and threonine 218. Position 267-268 (267-268 (HK)) interacts with deamido-NAD(+).

Belongs to the NAD synthetase family. In terms of assembly, homodimer.

It carries out the reaction deamido-NAD(+) + NH4(+) + ATP = AMP + diphosphate + NAD(+) + H(+). It participates in cofactor biosynthesis; NAD(+) biosynthesis; NAD(+) from deamido-NAD(+) (ammonia route): step 1/1. In terms of biological role, catalyzes the ATP-dependent amidation of deamido-NAD to form NAD. Uses ammonia as a nitrogen source. In Pseudomonas syringae pv. tomato (strain ATCC BAA-871 / DC3000), this protein is NH(3)-dependent NAD(+) synthetase.